Consider the following 102-residue polypeptide: Large ribosomal subunit protein bL28 (102 aa).

A compositionally biased stretch (polar residues) spans 1 to 20 (MSNSCDLTGHGWQNGNMVSH). The interval 1-27 (MSNSCDLTGHGWQNGNMVSHSNRKTKK) is disordered.

This sequence belongs to the bacterial ribosomal protein bL28 family.

The chain is Large ribosomal subunit protein bL28 from Neorickettsia sennetsu (strain ATCC VR-367 / Miyayama) (Ehrlichia sennetsu).